Reading from the N-terminus, the 569-residue chain is Putative ABC transporter ATP-binding protein TTE1589 (569 aa).

2 consecutive ABC transporter domains span residues 8–248 and 309–542; these read IIVK…IGLM and IQAK…LSLK. Residues 43–50 and 342–349 each bind ATP; these read GPSGAGKS and GHNGSGKT.

The protein belongs to the ABC transporter superfamily.

It is found in the cell membrane. Functionally, probably part of an ABC transporter complex. Responsible for energy coupling to the transport system. This chain is Putative ABC transporter ATP-binding protein TTE1589, found in Caldanaerobacter subterraneus subsp. tengcongensis (strain DSM 15242 / JCM 11007 / NBRC 100824 / MB4) (Thermoanaerobacter tengcongensis).